A 100-amino-acid chain; its full sequence is Large ribosomal subunit protein uL23 (100 aa).

It belongs to the universal ribosomal protein uL23 family. In terms of assembly, part of the 50S ribosomal subunit. Contacts protein L29, and trigger factor when it is bound to the ribosome.

Its function is as follows. One of the early assembly proteins it binds 23S rRNA. One of the proteins that surrounds the polypeptide exit tunnel on the outside of the ribosome. Forms the main docking site for trigger factor binding to the ribosome. In Baumannia cicadellinicola subsp. Homalodisca coagulata, this protein is Large ribosomal subunit protein uL23.